Consider the following 344-residue polypeptide: MARPRHQPGGLCLLLLLLCQFMEDRSAQAGNCWLRQAKNGRCQVLYKTELSKEECCSTGRLSTSWTEEDVNDNTLFKWMIFNGGAPNCIPCKETCENVDCGPGKKCRMNKKNKPRCVCAPDCSNITWKGLVCGLDGKTYRNECALLKARCKEQPELQVQYQGKCKKTCRDVFCPGSSTCVVDQTNNAYCVTCNRICPEPTSSEQYLCGNDGVTYPSACHLRKATCLLGRSIGLAYEGKCIKAKSCDDIQCTGGKKCLWDFKVGRGRCSLCGELCPESKSEEPVCASDNATYASECAMKEAACSSGVLLEVKHSGSCNSISEDTEDEEEDEDQDYSFPISSILEW.

An N-terminal signal peptide occupies residues 1–29 (MARPRHQPGGLCLLLLLLCQFMEDRSAQA). The region spanning 30-103 (GNCWLRQAKN…TCENVDCGPG (74 aa)) is the TB domain. 18 cysteine pairs are disulfide-bonded: Cys32/Cys55, Cys42/Cys88, Cys56/Cys91, Cys95/Cys106, Cys100/Cys116, Cys118/Cys150, Cys122/Cys143, Cys132/Cys164, Cys168/Cys179, Cys173/Cys189, Cys192/Cys225, Cys196/Cys218, Cys207/Cys239, Cys245/Cys256, Cys250/Cys267, Cys270/Cys302, Cys274/Cys295, and Cys284/Cys316. The Follistatin-like 1 domain maps to 94–117 (TCENVDCGPGKKCRMNKKNKPRCV). The region spanning 112–166 (NKPRCVCAPDCSNITWKGLVCGLDGKTYRNECALLKARCKEQPELQVQYQGKCKK) is the Kazal-like 1 domain. N-linked (GlcNAc...) asparagine glycosylation is present at Asn124. The Follistatin-like 2 domain occupies 167-190 (TCRDVFCPGSSTCVVDQTNNAYCV). The 56-residue stretch at 186-241 (NAYCVTCNRICPEPTSSEQYLCGNDGVTYPSACHLRKATCLLGRSIGLAYEGKCIK) folds into the Kazal-like 2 domain. A Follistatin-like 3 domain is found at 244–268 (SCDDIQCTGGKKCLWDFKVGRGRCS). The Kazal-like 3 domain occupies 261 to 318 (KVGRGRCSLCGELCPESKSEEPVCASDNATYASECAMKEAACSSGVLLEVKHSGSCNS). Asn288 carries an N-linked (GlcNAc...) asparagine glycan. Residues 316-344 (CNSISEDTEDEEEDEDQDYSFPISSILEW) are disordered. Over residues 321 to 333 (EDTEDEEEDEDQD) the composition is skewed to acidic residues.

As to quaternary structure, monomer.

The protein resides in the secreted. Functionally, binds directly to activin and functions as an activin antagonist. Specific inhibitor of the biosynthesis and secretion of pituitary follicle stimulating hormone (FSH). The protein is Follistatin of Bubalus bubalis (Domestic water buffalo).